Reading from the N-terminus, the 464-residue chain is Protein FAM90A24 (464 aa).

3 disordered regions span residues 1 to 42 (MMAR…DPRL), 69 to 389 (VPAT…HDGA), and 415 to 437 (HSPE…SEAP). 2 stretches are compositionally biased toward basic and acidic residues: residues 74–89 (GKKE…KPRG) and 97–114 (NKDK…DPQR). Positions 180 to 197 (LASLSPLRKASLSSSSSL) are enriched in low complexity.

This sequence belongs to the FAM90 family.

In Homo sapiens (Human), this protein is Protein FAM90A24.